The chain runs to 220 residues: Respiratory supercomplex factor 1, mitochondrial (220 aa).

Residues 13-104 (MPSSFDENHE…KDREATKELR (92 aa)) form the HIG1 domain. 2 helical membrane passes run 41–57 (LIPL…TQAW) and 76–93 (VAAQ…SMYY). Positions 91–145 (MYYNKDREATKELRKLKEERDSEEKRQKWIRELEIRDEEDKAMRARVMNRRAKAE) form a coiled coil. The tract at residues 139-220 (NRRAKAEEAK…RVSAEDDKTN (82 aa)) is disordered. Residues 164 to 179 (SGVLNALGLSGSSSGW) are compositionally biased toward low complexity.

Belongs to the RCF1 family. Associates with the respiratory chain complex III/complex IV supercomplex.

The protein localises to the mitochondrion membrane. Cytochrome c oxidase subunit which plays a role in assembly of respiratory supercomplexes. This chain is Respiratory supercomplex factor 1, mitochondrial (RCF1), found in Verticillium alfalfae (strain VaMs.102 / ATCC MYA-4576 / FGSC 10136) (Verticillium wilt of alfalfa).